Here is a 221-residue protein sequence, read N- to C-terminus: GTP cyclohydrolase 1 (221 aa).

Zn(2+) contacts are provided by Cys109, His112, and Cys180.

This sequence belongs to the GTP cyclohydrolase I family. In terms of assembly, toroid-shaped homodecamer, composed of two pentamers of five dimers.

It carries out the reaction GTP + H2O = 7,8-dihydroneopterin 3'-triphosphate + formate + H(+). It functions in the pathway cofactor biosynthesis; 7,8-dihydroneopterin triphosphate biosynthesis; 7,8-dihydroneopterin triphosphate from GTP: step 1/1. In Sodalis glossinidius (strain morsitans), this protein is GTP cyclohydrolase 1.